The sequence spans 497 residues: ADP-dependent glucokinase (497 aa).

Residues 1–22 form the signal peptide; that stretch reads MALWRGSAYAGFLALAVGCVFL. One can recognise an ADPK domain in the interval 52–497; the sequence is SPEGRLAAAW…LFYSEVHPHY (446 aa). The Mg(2+) site is built by Glu297, Glu328, and Asp481. Asp481 serves as the catalytic Proton acceptor.

It belongs to the ADP-dependent glucokinase family. In terms of assembly, monomer. Mg(2+) serves as cofactor.

It is found in the secreted. The catalysed reaction is D-glucose + ADP = D-glucose 6-phosphate + AMP + H(+). It functions in the pathway carbohydrate degradation; glycolysis. Catalyzes the phosphorylation of D-glucose to D-glucose 6-phosphate using ADP as the phosphate donor. GDP and CDP can replace ADP, but with reduced efficiency. The chain is ADP-dependent glucokinase (ADPGK) from Homo sapiens (Human).